The sequence spans 452 residues: Gastrin/cholecystokinin type B receptor (452 aa).

At 1–55 (MELVKLNRSVQGSGPVASLCRPGGPLLNNSGTGNLSCEPPRIRGAGTRELELAIR) the chain is on the extracellular side. N-linked (GlcNAc...) asparagine glycans are attached at residues Asn-7, Asn-28, and Asn-34. A helical transmembrane segment spans residues 56 to 77 (VTLYAVIFLMSVGGNILIIVVL). At 78-85 (GLSRRLRT) the chain is on the cytoplasmic side. Residues 86-107 (VTNAFLLSLAVSDLLLAVACMP) form a helical membrane-spanning segment. The Extracellular portion of the chain corresponds to 108-129 (FTLLPNLMGTFIFGTVICKAVS). Residues Cys-125 and Cys-203 are joined by a disulfide bond. Residues 130-148 (YLMGVSVSVSTLSLVAIAL) traverse the membrane as a helical segment. Residues 149-168 (ERYSAICRPLQARVWQTRSH) lie on the Cytoplasmic side of the membrane. Residues 169–187 (AARVILATWLLSGLLMVPY) form a helical membrane-spanning segment. Residues 188–217 (PVYTAVQPVGPRVLQCVHRWPSARVRQTWS) lie on the Extracellular side of the membrane. A helical transmembrane segment spans residues 218 to 240 (VLLLLLLFFVPGVVMAVAYGLIS). Residues 241–338 (RELYLGLRFD…KLLAKKRVVR (98 aa)) lie on the Cytoplasmic side of the membrane. Residues 255–285 (SESQSRVRGQGGLPGGAAPGPVHQNGRCRPE) form a disordered region. Over residues 263-272 (GQGGLPGGAA) the composition is skewed to gly residues. Residues 339–360 (MLLVIVVLFFMCWLPVYSANTW) form a helical membrane-spanning segment. Residues 361-378 (RAFDGPGAHRALSGAPIS) lie on the Extracellular side of the membrane. Residues 379–399 (FIHLLSYASACVNPLVYCFMH) traverse the membrane as a helical segment. Residues 400 to 452 (RRFRQACLDTCARCCPRPPRARPRPLPDEDPPTPSIASLSRLSYTTISTLGPG) lie on the Cytoplasmic side of the membrane. Residue Cys-413 is the site of S-palmitoyl cysteine attachment.

The protein belongs to the G-protein coupled receptor 1 family.

Its subcellular location is the cell membrane. In terms of biological role, receptor for gastrin and cholecystokinin. The CCK-B receptors occur throughout the central nervous system where they modulate anxiety, analgesia, arousal, and neuroleptic activity. This receptor mediates its action by association with G proteins that activate a phosphatidylinositol-calcium second messenger system. The protein is Gastrin/cholecystokinin type B receptor (CCKBR) of Oryctolagus cuniculus (Rabbit).